We begin with the raw amino-acid sequence, 472 residues long: FAD-dependent monooxygenase ltmM (472 aa).

A helical transmembrane segment spans residues 7–27 (VIIVGGSVAGLSLAHCLEKIG). The FAD site is built by glutamate 34, glycine 48, and arginine 107. Residue asparagine 186 is glycosylated (N-linked (GlcNAc...) asparagine). Residues aspartate 306 and alanine 319 each contribute to the FAD site. The helical transmembrane segment at 450–470 (IVYALYLVAAAAFILYCLSSL) threads the bilayer.

It belongs to the paxM FAD-dependent monooxygenase family. Requires FAD as cofactor.

The protein resides in the membrane. The protein operates within secondary metabolite biosynthesis. Its function is as follows. FAD-dependent monooxygenase; part of the gene cluster that mediates the biosynthesis of lolitrems, indole-diterpene mycotoxins that are potent tremorgens in mammals, and are synthesized by clavicipitaceous fungal endophytes in association with their grass hosts. The geranylgeranyl diphosphate (GGPP) synthase ltmG is proposed to catalyze the first step in lolitremB biosynthesis. LtmG catalyzes a series of iterative condensations of isopentenyl diphosphate (IPP) with dimethylallyl diphosphate (DMAPP), geranyl diphosphate (GPP), and farnesyl diphosphate (FPP), to form GGPP. GGPP then condenses with indole-3-glycerol phosphate to form 3-geranylgeranylindole, an acyclic intermediate, to be incorporated into paxilline. Either ltmG or ltmC could be responsible for this step, as both are putative prenyl transferases. The FAD-dependent monooxygenase ltmM then catalyzes the epoxidation of the two terminal alkenes of the geranylgeranyl moiety, which is subsequently cyclized by ltmB, to paspaline. The cytochrome P450 monooxygenases ltmQ and ltmP can sequentially oxidize paspaline to terpendole E and terpendole F. Alternatively, ltmP converts paspaline to an intermediate which is oxidized by ltmQ to terpendole F. LtmF, ltmK, ltmE and ltmJ appear to be unique to the epichloe endophytes. The prenyltransferase ltmF is involved in the 27-hydroxyl-O-prenylation. The cytochrome P450 monooxygenase ltmK is required for the oxidative acetal ring formation. The multi-functional prenyltransferase ltmE is required for C20- and C21-prenylations of the indole ring of paspalanes and acts together with the cytochrome P450 monooxygenase ltmJ to yield lolitremanes by multiple oxidations and ring closures. The stereoisomer pairs of lolitriol and lolitrem N or lolitrem B and lolitrem F may be attributed to variations in the way in which ring closure can occur under the action of ltmJ. While the major product of this pathway is lolitrem B, the prenyl transferases and cytochrome P450 monooxygenases identified in this pathway have a remarkable versatility in their regio- and stereo-specificities to generate a diverse range of metabolites that are products of a metabolic grid rather than a linear pathway. This is FAD-dependent monooxygenase ltmM (ltmM) from Epichloe festucae var. lolii (Neotyphodium lolii).